Consider the following 360-residue polypeptide: Methylthioribose-1-phosphate isomerase (360 aa).

Asp-246 functions as the Proton donor in the catalytic mechanism.

The protein belongs to the eIF-2B alpha/beta/delta subunits family. MtnA subfamily.

It localises to the cytoplasm. It is found in the nucleus. It catalyses the reaction 5-(methylsulfanyl)-alpha-D-ribose 1-phosphate = 5-(methylsulfanyl)-D-ribulose 1-phosphate. It participates in amino-acid biosynthesis; L-methionine biosynthesis via salvage pathway; L-methionine from S-methyl-5-thio-alpha-D-ribose 1-phosphate: step 1/6. In terms of biological role, catalyzes the interconversion of methylthioribose-1-phosphate (MTR-1-P) into methylthioribulose-1-phosphate (MTRu-1-P). The chain is Methylthioribose-1-phosphate isomerase from Aedes aegypti (Yellowfever mosquito).